Here is a 220-residue protein sequence, read N- to C-terminus: Ribosomal RNA large subunit methyltransferase E (220 aa).

Residues G60, W62, D92, D108, and D133 each coordinate S-adenosyl-L-methionine. K173 acts as the Proton acceptor in catalysis. Residues A195–R220 are disordered.

Belongs to the class I-like SAM-binding methyltransferase superfamily. RNA methyltransferase RlmE family.

The protein localises to the cytoplasm. The catalysed reaction is uridine(2552) in 23S rRNA + S-adenosyl-L-methionine = 2'-O-methyluridine(2552) in 23S rRNA + S-adenosyl-L-homocysteine + H(+). Specifically methylates the uridine in position 2552 of 23S rRNA at the 2'-O position of the ribose in the fully assembled 50S ribosomal subunit. The protein is Ribosomal RNA large subunit methyltransferase E of Burkholderia lata (strain ATCC 17760 / DSM 23089 / LMG 22485 / NCIMB 9086 / R18194 / 383).